The following is a 61-amino-acid chain: Small ribosomal subunit protein uS14 (61 aa).

Zn(2+) contacts are provided by C24, C27, C40, and C43.

This sequence belongs to the universal ribosomal protein uS14 family. Zinc-binding uS14 subfamily. In terms of assembly, part of the 30S ribosomal subunit. Contacts proteins S3 and S10. Requires Zn(2+) as cofactor.

Functionally, binds 16S rRNA, required for the assembly of 30S particles and may also be responsible for determining the conformation of the 16S rRNA at the A site. This chain is Small ribosomal subunit protein uS14, found in Campylobacter lari (strain RM2100 / D67 / ATCC BAA-1060).